A 703-amino-acid polypeptide reads, in one-letter code: Pentatricopeptide repeat-containing protein At1g22830 (703 aa).

15 PPR repeats span residues 82–116, 117–147, 148–182, 183–217, 218–248, 249–283, 284–318, 319–353, 356–386, 387–421, 422–452, 458–488, 489–523, 524–554, and 560–594; these read VLYSSASLLSTCVGFNEFVPGQQLHAHCISSGLEF, DSVLVPKLVTFYSAFNLLDEAQTITENSEIL, HPLPWNVLIGSYIRNKRFQESVSVYKRMMSKGIRA, DEFTYPSVIKACAALLDFAYGRVVHGSIEVSSHRC, NLYVCNALISMYKRFGKVDVARRLFDRMSER, DAVSWNAIINCYTSEEKLGEAFKLLDRMYLSGVEA, SIVTWNTIAGGCLEAGNYIGALNCVVGMRNCNVRI, GSVAMINGLKACSHIGALKWGKVFHCLVIRSCSFS, IDNVRNSLITMYSRCSDLRHAFIVFQQVEAN, SLSTWNSIISGFAYNERSEETSFLLKEMLLSGFHP, NHITLASILPLFARVGNLQHGKEFHCYILRR, CLILWNSLVDMYAKSGEIIAAKRVFDSMRKR, DKVTYTSLIDGYGRLGKGEVALAWFKDMDRSGIKP, DHVTMVAVLSACSHSNLVREGHWLFTKMEHV, and RLEHYSCMVDLYCRAGYLDKARDIFHTIPYEPSSA. The type E motif stretch occupies residues 595–671; the sequence is MCATLLKACL…AHEFALMETD (77 aa). The segment at 671–703 is disordered; sequence DSELDGENNKPMNDDSVINQEQSSDEERLVEVG.

Belongs to the PPR family. PCMP-E subfamily.

The protein is Pentatricopeptide repeat-containing protein At1g22830 (PCMP-E24) of Arabidopsis thaliana (Mouse-ear cress).